Consider the following 95-residue polypeptide: uncharacterized protein (95 aa).

The signal sequence occupies residues 1-21 (MKVLSISLIFFALLLTGCSQV).

This is an uncharacterized protein from Archaeoglobus fulgidus (strain ATCC 49558 / DSM 4304 / JCM 9628 / NBRC 100126 / VC-16).